The primary structure comprises 735 residues: Rho GTPase-activating protein SYDE1 (735 aa).

The segment at 1 to 253 is disordered; the sequence is MAEPLLRKTF…SPTSFRPYEV (253 aa). Basic and acidic residues predominate over residues 14-31; the sequence is RGREKLPRKKSDAKERGH. Pro residues predominate over residues 35 to 46; it reads RPEPSPPEPEPQ. Residues 47 to 71 are compositionally biased toward low complexity; the sequence is APEGSQAGAEGPSSPEASRSPARGA. Pro residues predominate over residues 122 to 131; sequence PPAPEPPGPQ. Over residues 211–221 the composition is skewed to gly residues; sequence GGPGPAAGPGG. Phosphoserine is present on residues Ser-224, Ser-231, Ser-235, and Ser-244. One can recognise a C2 domain in the interval 249-366; the sequence is RPYEVGPAAR…FRGCQAQQLA (118 aa). The region spanning 398–604 is the Rho-GAP domain; sequence LPLPLLVERE…YLLQSWPDPR (207 aa). A Phosphoserine modification is found at Ser-575. Disordered regions lie at residues 608–651 and 674–696; these read QSPD…SNRY and DYDH…PRVT. 2 positions are modified to phosphoserine: Ser-681 and Ser-683.

In terms of processing, palmitoylated. Probably palmitoylated by ZDHHC3 and ZDHHC7. As to expression, expressed in trophoblast cells of placental villi.

In terms of biological role, GTPase activator for the Rho-type GTPases. As a GCM1 downstream effector, it is involved in placental development and positively regulates trophoblast cells migration. It regulates cytoskeletal remodeling by controlling the activity of Rho GTPases including RHOA, CDC42 and RAC1. The protein is Rho GTPase-activating protein SYDE1 (SYDE1) of Homo sapiens (Human).